The chain runs to 121 residues: MTKDMCEVTYIHEDKVNRAKKDLAKQNPMDVAKVFKALSDDTRVKIAYVLSLEGELCVCDVANIIESSTATASHHLRLLKNLGIAKYRKEGKLVYYSLDDEHVKQLVEKAFLHQREVASIG.

The region spanning L23–A118 is the HTH arsR-type domain. A DNA-binding region (H-T-H motif) is located at residues V58–R77.

This is Cadmium resistance transcriptional regulatory protein CadC homolog (cadC) from Staphylococcus aureus.